A 212-amino-acid polypeptide reads, in one-letter code: MFAEYGVLNYWTYLVGAIFIVLVPGPNTLFVLKNSVSSGMKGGYLAACGVFIGDAVLMFLAWAGVATLIKTTPILFNIVRYLGAFYLLYLGSKILYATLKGKNSEAKSDEPQYGAIFKRALILSLTNPKAILFYVSFFVQFIDVNAPHTGISFFILAATLELVSFCYLSFLIISGAFVTQYIRTKKKLAKVGNSLIGLMFVGFAARLATLQS.

The next 6 membrane-spanning stretches (helical) occupy residues 12 to 32 (TYLV…LFVL), 49 to 69 (GVFI…ATLI), 71 to 91 (TTPI…LYLG), 122 to 142 (ILSL…VQFI), 153 to 173 (FFIL…FLII), and 188 to 208 (LAKV…ARLA).

It belongs to the Rht family.

The protein localises to the cell inner membrane. The enzyme catalyses L-leucine(in) + H(+)(out) = L-leucine(out) + H(+)(in). With respect to regulation, leucine export is inhibited by the proton ionophore carbonyl cyanide m-chlorophenylhydrazone (CCCP). In terms of biological role, exporter of leucine. Can also transport its natural analog L-alpha-amino-n-butyric acid and some other structurally unrelated amino acids. Leucine excretion is probably driven by proton motive force. This Escherichia coli (strain K12) protein is Leucine efflux protein.